The chain runs to 551 residues: Putative BTB/POZ domain-containing protein L76 (551 aa).

Positions 19-90 (TDIILEIEDD…FYGQENDVID (72 aa)) constitute a BTB domain.

It belongs to the mimivirus BTB/WD family.

This Acanthamoeba polyphaga (Amoeba) protein is Putative BTB/POZ domain-containing protein L76.